The primary structure comprises 364 residues: Metalloendoproteinase 1-MMP (364 aa).

The signal sequence occupies residues 1–28 (MSRNLIYRRNRALCFVLILFCFPYRFGA). Residues 29–149 (RNTPEAEQST…NNDFLHTTAH (121 aa)) constitute a propeptide, activation peptide. The N-linked (GlcNAc...) asparagine glycan is linked to Asn49. The Cysteine switch motif lies at 128–135 (PRCGVSDT). Cys130 contacts Zn(2+). Asp211 contributes to the Ca(2+) binding site. Zn(2+) is bound by residues His221 and Asp223. Ca(2+)-binding residues include Asp228 and Gly229. Position 236 (His236) interacts with Zn(2+). Gly243 is a binding site for Ca(2+). His246 contributes to the Zn(2+) binding site. 2 residues coordinate Ca(2+): Asp248 and Glu251. His275 is a Zn(2+) binding site. The active site involves Glu276. Zn(2+) contacts are provided by His279 and His285. A glycan (N-linked (GlcNAc...) asparagine) is linked at Asn338. Gly339 carries the GPI-anchor amidated glycine lipid modification. Residues 340-364 (TVSHRFLSGNFIGYVLLVVGLILFL) constitute a propeptide, removed in mature form.

Belongs to the peptidase M10A family. Matrix metalloproteinases (MMPs) subfamily. Ca(2+) serves as cofactor. Requires Zn(2+) as cofactor. As to expression, mostly expressed in flowers, roots and stems, and, to a lower extent, in leaves.

It localises to the cell membrane. With respect to regulation, inhibited by human TIMP-1 and TIMP-2 and by the peptide hydroxamate inhibitor (BB-94). Repressed by acetohydroxamic acid (AHA). In terms of biological role, matrix metalloproteinases (MMPs) or matrixins may play a role in the degradation and remodeling of the extracellular matrix (ECM) during development or in response to stresses. Can cleave myelin basic protein as well as fluorigenic peptide substrates, McaPLANvaDpaAR-NH(2) and McaPChaGNvaHADpa-NH(2) 4-fold more efficiently than McaPLGLDpaAR-NH(2) (QF24). Active on myelin basic protein (MBP) and, to some extent, on McaPLGLDpaAR-NH(2) (QF24) and beta-casein. The protein is Metalloendoproteinase 1-MMP of Arabidopsis thaliana (Mouse-ear cress).